Here is a 295-residue protein sequence, read N- to C-terminus: 33 kDa chaperonin (295 aa).

2 cysteine pairs are disulfide-bonded: C237-C239 and C270-C273.

It belongs to the HSP33 family. Post-translationally, under oxidizing conditions two disulfide bonds are formed involving the reactive cysteines. Under reducing conditions zinc is bound to the reactive cysteines and the protein is inactive.

Its subcellular location is the cytoplasm. Its function is as follows. Redox regulated molecular chaperone. Protects both thermally unfolding and oxidatively damaged proteins from irreversible aggregation. Plays an important role in the bacterial defense system toward oxidative stress. This Shouchella clausii (strain KSM-K16) (Alkalihalobacillus clausii) protein is 33 kDa chaperonin.